Consider the following 162-residue polypeptide: MGLETEKADVQLFMDDDSYSRHSSVDYADPDKFVDPGSDRDPHRLNSHLKVGFEDVIAEPVSTHSFDKVWICSHALFEMSKYVIYKFLTVFLAIPLAFAAGILFATLSCLHIWIIMPFVKTCLMVLPSVQTIWKSVTDVVIAPLCTSIGRSFSSVSLQLSHD.

Residues methionine 1–lysine 86 lie on the Cytoplasmic side of the membrane. Residue tyrosine 19 is modified to Phosphotyrosine; by SRC. A phosphoserine mark is found at serine 20 and serine 23. Residue tyrosine 27 is modified to Phosphotyrosine; by SRC. Positions phenylalanine 87 to leucine 107 form an intramembrane region, helical. At serine 108 to aspartate 162 the chain is on the cytoplasmic side.

The protein belongs to the caveolin family. As to quaternary structure, monomer or homodimer. Interacts with CAV1; the interaction forms a stable heterooligomeric complex that is required for targeting to lipid rafts and for caveolae formation. Tyrosine phosphorylated forms do not form heterooligomers with the Tyr-19-phosphorylated form existing as a monomer or dimer, and the Tyr-27-form as a monomer only. Interacts (tyrosine phosphorylated form) with the SH2 domain-containing proteins, RASA1, NCK1 and SRC. Interacts (tyrosine phosphorylated form) with INSR, the interaction (Tyr-27-phosphorylated form) is increased on insulin stimulation. Interacts (Tyr-19 phosphorylated form) with MAPK1 (phosphorylated form); the interaction, promoted by insulin, leads to nuclear location and MAPK1 activation. Interacts with STAT3; the interaction is increased on insulin-induced tyrosine phosphorylation leading to STAT activation. In terms of processing, phosphorylated on serine and tyrosine residues. CAV1 promotes phosphorylation on Ser-23 which then targets the complex to the plasma membrane, lipid rafts and caveolae. Phosphorylation on both Tyr-19 and Tyr-27 is required for insulin-induced 'Ser-727' phosphorylation of STAT3 and its activation. Phosphorylation on Tyr-19 is required for insulin-induced phosphorylation of MAPK1 and DNA binding of STAT3. Tyrosine phosphorylation is induced by both EGF and insulin. In terms of tissue distribution, expressed in aortic endothelial cells.

Its subcellular location is the nucleus. The protein localises to the cytoplasm. It is found in the golgi apparatus membrane. It localises to the cell membrane. The protein resides in the membrane. Its subcellular location is the caveola. May act as a scaffolding protein within caveolar membranes. Interacts directly with G-protein alpha subunits and can functionally regulate their activity. Acts as an accessory protein in conjunction with CAV1 in targeting to lipid rafts and driving caveolae formation. Positive regulator of cellular mitogenesis of the MAPK signaling pathway. Required for the insulin-stimulated nuclear translocation and activation of MAPK1 and STAT3, and the subsequent regulation of cell cycle progression. The sequence is that of Caveolin-2 (CAV2) from Bos taurus (Bovine).